The sequence spans 495 residues: Cytochrome P450 monooxygenase BOA4 (495 aa).

The chain crosses the membrane as a helical span at residues 12 to 31; the sequence is LANSNTVIAGCIVFALYYLF. The N-linked (GlcNAc...) asparagine glycan is linked to Asn115. Position 439 (Cys439) interacts with heme.

Belongs to the cytochrome P450 family. It depends on heme as a cofactor.

The protein localises to the membrane. It functions in the pathway polyketide biosynthesis. In terms of biological role, cytochrome P450 monooxygenase; part of the gene cluster A that mediates the biosynthesis of botcinic acid and its botcinin derivatives, acetate-derived polyketides that contribute to virulence when combined with the sesquiterpene botrydial. Botcinic acid and its derivatives have been shown to induce chlorosis and necrosis during host plant infection, but also have antifungal activities. Two polyketide synthases, BOA6 and BOA9, are involved in the biosynthesis of botcinins. BOA6 mediates the formation of the per-methylated tetraketide core by condensation of four units of malonyl-CoA with one unit of acetyl-CoA, which would be methylated in activated methylene groups to yield a bicyclic acid intermediate that could then either be converted to botrylactone derivatives or lose the starter acetate unit through a retro-Claisen type C-C bond cleavage to yield botcinin derivatives. The second polyketide synthase, BOA9, is probably required for the biosynthesis of the tetraketide side chain of botcinins. The methyltransferase (MT) domain within BOA6 is probably responsible for the incorporation of four methyl groups. The trans-enoyl reductase BOA5 might take over the enoyl reductase function of BOA6 that misses an ER domain. The monooxygenases BOA2, BOA3 and BOA4 might be involved in further hydroxylations at C4, C5 and C8, whereas BOA7, close to BOA9, could potentially be involved in the hydroxylation at C4 in the side chain of botcinins. The sequence is that of Cytochrome P450 monooxygenase BOA4 from Botryotinia fuckeliana (strain B05.10) (Noble rot fungus).